A 472-amino-acid chain; its full sequence is Mixed lineage kinase domain-like protein (472 aa).

The segment at 1–143 is N-terminal bundle and brace (NBB); mediates INSP6 binding; sequence MDKLGQIIKL…QEDRQDAEED (143 aa). Positions 61 to 81 form a coiled coil; that stretch reads LGRFDEVLKEANQQIEKFSKK. S124 carries the post-translational modification Phosphoserine. Residues 138-229 are a coiled coil; the sequence is QDAEEDGNEN…VFNNPQAESV (92 aa). A Protein kinase domain is found at 192–456; that stretch reads GPPWTKLKTS…DGRSLSGRER (265 aa). ATP contacts are provided by residues 198-206 and K219; that span reads LKTSKMSTI. Phosphoserine; by RIPK3 is present on residues S345 and S347. T349 is subject to Phosphothreonine; by RIPK3. The residue at position 352 (S352) is a Phosphoserine; by RIPK3.

The protein belongs to the protein kinase superfamily. As to quaternary structure, homooligomer. Homotrimer; forms homotrimers on necroptosis induction. Upon TNF-induced necrosis, forms in complex with PGAM5, RIPK1 and RIPK3. Within this complex, may play a role in the proper targeting of RIPK1-RIPK3 to its downstream effector PGAM5. Interacts with RIPK3; the interaction is direct and promotes its phosphorylation and subsequent activation. Phosphorylation by RIPK3 induces a conformational switch that is required for necroptosis. It also induces homotrimerization and localization to the plasma membrane. Highly expressed in thymus, colon, intestine, liver, spleen and lung. Expressed at much lower level in skeletal muscle, heart and kidney. Not detected in brain.

The protein resides in the cytoplasm. The protein localises to the cell membrane. Its subcellular location is the nucleus. Activated via binding to highly phosphorylated inositol phosphates such as inositolhexakisphosphate (InsP6) which mediates the release of an N-terminal auto-inhibitory region. Activation requires not only RIPK3-dependent phosphorylation but also binding to highly phosphorylated inositol phosphates. Pseudokinase that plays a key role in TNF-induced necroptosis, a programmed cell death process. Does not have protein kinase activity. Activated following phosphorylation by RIPK3, leading to homotrimerization, localization to the plasma membrane and execution of programmed necrosis characterized by calcium influx and plasma membrane damage. In addition to TNF-induced necroptosis, necroptosis can also take place in the nucleus in response to orthomyxoviruses infection: following ZBP1 activation, which senses double-stranded Z-RNA structures, nuclear RIPK3 catalyzes phosphorylation and activation of MLKL, promoting disruption of the nuclear envelope and leakage of cellular DNA into the cytosol. Binds to highly phosphorylated inositol phosphates such as inositolhexakisphosphate (InsP6) which is essential for its necroptotic function. This Mus musculus (Mouse) protein is Mixed lineage kinase domain-like protein.